The sequence spans 219 residues: Large ribosomal subunit protein uL3 (219 aa).

Residues 140-163 are disordered; the sequence is SASHGAHRNHRKPGSIGASSTPSR.

The protein belongs to the universal ribosomal protein uL3 family. Part of the 50S ribosomal subunit. Forms a cluster with proteins L14 and L19.

One of the primary rRNA binding proteins, it binds directly near the 3'-end of the 23S rRNA, where it nucleates assembly of the 50S subunit. This Leifsonia xyli subsp. xyli (strain CTCB07) protein is Large ribosomal subunit protein uL3.